Consider the following 129-residue polypeptide: Glycine cleavage system H protein (129 aa).

One can recognise a Lipoyl-binding domain in the interval 24–106; that stretch reads TYTVGITEHA…YTDGWIFKIK (83 aa). Lys65 carries the post-translational modification N6-lipoyllysine.

This sequence belongs to the GcvH family. As to quaternary structure, the glycine cleavage system is composed of four proteins: P, T, L and H. Requires (R)-lipoate as cofactor.

Functionally, the glycine cleavage system catalyzes the degradation of glycine. The H protein shuttles the methylamine group of glycine from the P protein to the T protein. The chain is Glycine cleavage system H protein from Klebsiella pneumoniae subsp. pneumoniae (strain ATCC 700721 / MGH 78578).